Here is a 235-residue protein sequence, read N- to C-terminus: Purine nucleoside phosphorylase DeoD-type (235 aa).

Histidine 4 is a binding site for a purine D-ribonucleoside. Phosphate contacts are provided by residues glycine 20, arginine 24, arginine 43, and arginine 87 to threonine 90. Residues glutamate 179 to glutamate 181 and serine 203 to asparagine 204 contribute to the a purine D-ribonucleoside site.

Belongs to the PNP/UDP phosphorylase family. As to quaternary structure, homohexamer; trimer of homodimers.

The enzyme catalyses a purine D-ribonucleoside + phosphate = a purine nucleobase + alpha-D-ribose 1-phosphate. It carries out the reaction a purine 2'-deoxy-D-ribonucleoside + phosphate = a purine nucleobase + 2-deoxy-alpha-D-ribose 1-phosphate. Catalyzes the reversible phosphorolytic breakdown of the N-glycosidic bond in the beta-(deoxy)ribonucleoside molecules, with the formation of the corresponding free purine bases and pentose-1-phosphate. This Levilactobacillus brevis (strain ATCC 367 / BCRC 12310 / CIP 105137 / JCM 1170 / LMG 11437 / NCIMB 947 / NCTC 947) (Lactobacillus brevis) protein is Purine nucleoside phosphorylase DeoD-type.